We begin with the raw amino-acid sequence, 378 residues long: Ferredoxin--NADP reductase, root isozyme, chloroplastic (378 aa).

Positions 1–17 (MATAVASQVAVSAPAGS) are enriched in low complexity. Residues 1-27 (MATAVASQVAVSAPAGSDRGLRSSGIQ) are disordered. The N-terminal 62 residues, 1–62 (MATAVASQVA…PRHANKVLCM (62 aa)), are a transit peptide targeting the chloroplast. Residues 93–221 (KEPYTATIVS…TGPSGKIMLL (129 aa)) form the FAD-binding FR-type domain. FAD contacts are provided by residues 153 to 156 (RLYS), 174 to 176 (CVR), Tyr180, 195 to 197 (VCS), and Thr237. NADP(+) contacts are provided by Ser156 and Arg176. NADP(+)-binding positions include Thr237, 269 to 270 (VA), 299 to 300 (SR), Lys309, 337 to 338 (GL), and Glu376.

It belongs to the ferredoxin--NADP reductase type 1 family. FAD is required as a cofactor.

The protein resides in the plastid. It localises to the chloroplast. The catalysed reaction is 2 reduced [2Fe-2S]-[ferredoxin] + NADP(+) + H(+) = 2 oxidized [2Fe-2S]-[ferredoxin] + NADPH. The protein operates within energy metabolism; photosynthesis. Its function is as follows. May play a key role in regulating the relative amounts of cyclic and non-cyclic electron flow to meet the demands of the plant for ATP and reducing power. Is involved in nitrate assimilation. This Oryza sativa subsp. japonica (Rice) protein is Ferredoxin--NADP reductase, root isozyme, chloroplastic.